The following is a 438-amino-acid chain: Cyanidin-3-O-glucoside 2-O-glucuronosyltransferase (438 aa).

UDP-alpha-D-glucuronate-binding positions include serine 264, 315–316, 333–341, and 355–358; these read WV, HCGWSSTME, and QFDQ.

Belongs to the UDP-glycosyltransferase family. As to quaternary structure, monomer. In terms of tissue distribution, expressed in petals. Not detected in sepals, stems, leaves, tubular corollas and white petals.

Its subcellular location is the cytoplasm. It carries out the reaction cyanidin 3-O-beta-D-glucoside + UDP-alpha-D-glucuronate = cyanidin 3-O-(2-O-beta-D-glucuronosyl)-beta-D-glucoside + UDP + H(+). Its activity is regulated as follows. Inhibited by copper, mercury, UDP, UTP and partially by calcium, cadmium, iron and UMP. Not affected by cobalt, magnesium, manganese, zinc, nickel, tin, uridine, sadium malonate and glucose. Functionally, involved in the production of glucuronosylated anthocyanins that are the origin of the red coloration of flowers. Can use cyanidin 3-O-6''-O-malonylglucoside, cyanidin 3-O-glucoside and delphinidin 3-O-glucosideas substrates, but not pelargonidin 3-O-glucoside, cyanidin 3-O-3'',6''-O-dimalonylglucoside, pelargonidin 3,5-O-diglucoside, pelargonidin 3-O-6''-O-malonylglucoside-5-O-glucoside, quercetin 3-O-glucoside, quercetin 3-O-6''-O-malonylglucoside, daidzin, genistin,7-O-6''-O-malonylglucosides of daidzein and genistein, cyanidin, quercetin, daidzein, genistein p-Nitrophenyl beta-D-glucopyranoside, beta-estradiol, 17alpha-estradiol, 1-naphthol, 2-naphthol, 4-methylumbelliferone, and p-nitrophenol. Highly specific for UDP-glucuronate (UDP-GlcUA). Arg-25 is decisive with respect to UDP-sugar specificity. The chain is Cyanidin-3-O-glucoside 2-O-glucuronosyltransferase (UGAT) from Bellis perennis (English daisy).